A 316-amino-acid chain; its full sequence is Olfactory receptor 51J1 (316 aa).

Over 1–31 (MKISNNSLGFLPTTFILVGIPGLESEHLWIS) the chain is Extracellular. Asn-5 is a glycosylation site (N-linked (GlcNAc...) asparagine). A helical membrane pass occupies residues 32 to 52 (VPFSLIYIIIFLGNGIILHVI). Topologically, residues 53–63 (RTDIALHQPMY) are cytoplasmic. Residues 64-84 (LFLAMLALAEVRVSASTLPTV) form a helical membrane-spanning segment. The Extracellular portion of the chain corresponds to 85–104 (LGIFLFGNTEISLEACLFPD). Cys-100 and Cys-191 form a disulfide bridge. The helical transmembrane segment at 105–125 (VLHPFFIHDGASCAAGHVFGP) threads the bilayer. Over 126–161 (LYSHLQPTELHSYPDTAQGLWHRSYYRTEKHYAHGS) the chain is Cytoplasmic. Residues 162-182 (VAHSLMASALLWPQCPLTFLL) traverse the membrane as a helical segment. At 183–191 (SAPQSYLSC) the chain is on the extracellular side. A helical transmembrane segment spans residues 192-212 (GNISVNNIYGIFIVTSTFGLD). Residues 213–242 (SLLIVISYGLILHTVLGIATGEGRKKALNT) lie on the Cytoplasmic side of the membrane. Residues 243–263 (CGSHVCAVLAYYVPMIGLSIV) traverse the membrane as a helical segment. Over 264 to 275 (HRLGHRVSPLLQ) the chain is Extracellular. Residues 276–296 (AMMANAYLFFPPVVNPIVYSI) form a helical membrane-spanning segment. Over 297-316 (KTKEIHGAIVRMLLEKRRRV) the chain is Cytoplasmic.

Belongs to the G-protein coupled receptor 1 family.

It is found in the cell membrane. Its function is as follows. Odorant receptor. The polypeptide is Olfactory receptor 51J1 (OR51J1) (Homo sapiens (Human)).